Here is a 185-residue protein sequence, read N- to C-terminus: Ubiquitin-fold modifier-conjugating enzyme 1 (185 aa).

The Glycyl thioester intermediate role is filled by C119.

This sequence belongs to the ubiquitin-conjugating enzyme family. UFC1 subfamily.

E2-like enzyme which forms an intermediate with UFM1 via a thioester linkage. This chain is Ubiquitin-fold modifier-conjugating enzyme 1, found in Oryza sativa subsp. japonica (Rice).